We begin with the raw amino-acid sequence, 228 residues long: ATP-dependent dethiobiotin synthetase BioD (228 aa).

Glu12 to Thr17 is a binding site for ATP. Thr16 lines the Mg(2+) pocket. Lys37 is a catalytic residue. Ser41 is a binding site for substrate. Residues Asp54, Glu116 to Gly119, and Pro205 to Leu207 contribute to the ATP site. Residues Asp54 and Glu116 each coordinate Mg(2+).

It belongs to the dethiobiotin synthetase family. Homodimer. It depends on Mg(2+) as a cofactor.

It localises to the cytoplasm. It catalyses the reaction (7R,8S)-7,8-diammoniononanoate + CO2 + ATP = (4R,5S)-dethiobiotin + ADP + phosphate + 3 H(+). Its pathway is cofactor biosynthesis; biotin biosynthesis; biotin from 7,8-diaminononanoate: step 1/2. Its function is as follows. Catalyzes a mechanistically unusual reaction, the ATP-dependent insertion of CO2 between the N7 and N8 nitrogen atoms of 7,8-diaminopelargonic acid (DAPA, also called 7,8-diammoniononanoate) to form a ureido ring. This is ATP-dependent dethiobiotin synthetase BioD from Pseudomonas paraeruginosa (strain DSM 24068 / PA7) (Pseudomonas aeruginosa (strain PA7)).